The primary structure comprises 203 residues: Small ribosomal subunit protein uS4 (203 aa).

An S4 RNA-binding domain is found at 93–156 (RRLDNVVYRL…MKVPAILEAV (64 aa)).

This sequence belongs to the universal ribosomal protein uS4 family. In terms of assembly, part of the 30S ribosomal subunit. Contacts protein S5. The interaction surface between S4 and S5 is involved in control of translational fidelity.

Functionally, one of the primary rRNA binding proteins, it binds directly to 16S rRNA where it nucleates assembly of the body of the 30S subunit. With S5 and S12 plays an important role in translational accuracy. The protein is Small ribosomal subunit protein uS4 of Streptococcus uberis (strain ATCC BAA-854 / 0140J).